The chain runs to 185 residues: Ribosome-recycling factor (185 aa).

A disordered region spans residues 135-159; the sequence is ANDEVKKLEKDKAITEDESKKGQDE.

The protein belongs to the RRF family.

The protein localises to the cytoplasm. Functionally, responsible for the release of ribosomes from messenger RNA at the termination of protein biosynthesis. May increase the efficiency of translation by recycling ribosomes from one round of translation to another. This Campylobacter curvus (strain 525.92) protein is Ribosome-recycling factor.